We begin with the raw amino-acid sequence, 1556 residues long: Ferredoxin-dependent glutamate synthase 2 (1556 aa).

C37 (for GATase activity) is an active-site residue. Positions 37 to 431 constitute a Glutamine amidotransferase type-2 domain; the sequence is CGVGFIANLR…PGQMIAVDLA (395 aa). 3 residues coordinate [3Fe-4S] cluster: C1173, C1179, and C1184. Residues 1533 to 1556 form a disordered region; the sequence is PSEKDSPEANGDVSLTGEKTLTSV.

Belongs to the glutamate synthase family. The cofactor is [3Fe-4S] cluster. FAD is required as a cofactor. Requires FMN as cofactor.

It catalyses the reaction 2 oxidized [2Fe-2S]-[ferredoxin] + 2 L-glutamate = L-glutamine + 2 reduced [2Fe-2S]-[ferredoxin] + 2-oxoglutarate + 2 H(+). It participates in amino-acid biosynthesis; L-glutamate biosynthesis via GLT pathway; L-glutamate from 2-oxoglutarate and L-glutamine (ferredoxin route): step 1/1. The protein operates within energy metabolism; nitrogen metabolism. This is Ferredoxin-dependent glutamate synthase 2 (gltS) from Synechocystis sp. (strain ATCC 27184 / PCC 6803 / Kazusa).